The following is a 496-amino-acid chain: Beta-N-acetylhexosaminidase (496 aa).

Residue E298 is the Proton donor of the active site.

It belongs to the glycosyl hydrolase 20 family.

The catalysed reaction is Hydrolysis of terminal non-reducing N-acetyl-D-hexosamine residues in N-acetyl-beta-D-hexosaminides.. It participates in glycan degradation; chitin degradation. Catalyzes the cleavage of beta-N-acetylglucosaminides and beta-N-acetylgalactosaminides. Also catalyzes the hydrolysis of N-acetylchitooligomers. May be involved in chitin degradation. It is not able to cleave beta-glucosides. This Cellulomonas fimi protein is Beta-N-acetylhexosaminidase (hex20).